The chain runs to 225 residues: NAD(P)H-hydrate epimerase (225 aa).

In terms of domain architecture, YjeF N-terminal spans 9–209 (MQTIDNYTVE…DIGLLTPQDF (201 aa)). Position 57–61 (57–61 (NNGAD)) interacts with (6S)-NADPHX. K(+) contacts are provided by Asn-58 and Asp-119. Residues 123–129 (GTGLNNL) and Asp-152 contribute to the (6S)-NADPHX site. Thr-155 serves as a coordination point for K(+).

The protein belongs to the NnrE/AIBP family. It depends on K(+) as a cofactor.

The catalysed reaction is (6R)-NADHX = (6S)-NADHX. It catalyses the reaction (6R)-NADPHX = (6S)-NADPHX. Catalyzes the epimerization of the S- and R-forms of NAD(P)HX, a damaged form of NAD(P)H that is a result of enzymatic or heat-dependent hydration. This is a prerequisite for the S-specific NAD(P)H-hydrate dehydratase to allow the repair of both epimers of NAD(P)HX. This is NAD(P)H-hydrate epimerase from Leuconostoc sp. (strain C2).